The primary structure comprises 1374 residues: DNA-directed RNA polymerase subunit beta (1374 aa).

The protein belongs to the RNA polymerase beta chain family. The RNAP catalytic core consists of 2 alpha, 1 beta, 1 beta' and 1 omega subunit. When a sigma factor is associated with the core the holoenzyme is formed, which can initiate transcription.

The enzyme catalyses RNA(n) + a ribonucleoside 5'-triphosphate = RNA(n+1) + diphosphate. DNA-dependent RNA polymerase catalyzes the transcription of DNA into RNA using the four ribonucleoside triphosphates as substrates. The protein is DNA-directed RNA polymerase subunit beta of Rhodopseudomonas palustris (strain BisB5).